The sequence spans 418 residues: Zinc finger protein 566 (418 aa).

Residues 6–77 enclose the KRAB domain; the sequence is VMFSDVSVDF…DRELTRGQWP (72 aa). Residues 169–193 form a C2H2-type 1; degenerate zinc finger; it reads KFCASKEYRKTFRHGSQFATHEIIH. 7 C2H2-type zinc fingers span residues 199-221, 227-249, 255-277, 283-305, 311-333, 339-361, and 367-389; these read YECKECGKSFRHPSRLTHHQKIH, FECKECGKTFICGSDLTRHHRIH, YECKECGKAFSSGSNFTRHQRIH, YECKECGKAFSSGSNFTQHQRIH, YECKECGNAFSQSSQLIKHQRIH, YECKECEKAFRSGSDLTRHQRIH, and YECKICGKAYSQSSQLISHHRIH. Glycyl lysine isopeptide (Lys-Gly) (interchain with G-Cter in SUMO2) cross-links involve residues K314 and K328.

The protein belongs to the krueppel C2H2-type zinc-finger protein family.

The protein localises to the nucleus. Its function is as follows. May be involved in transcriptional regulation. In Pan troglodytes (Chimpanzee), this protein is Zinc finger protein 566 (ZNF566).